A 91-amino-acid polypeptide reads, in one-letter code: Large ribosomal subunit protein uL23c (91 aa).

The protein belongs to the universal ribosomal protein uL23 family. Part of the 50S ribosomal subunit.

The protein localises to the plastid. It is found in the chloroplast. Binds to 23S rRNA. This Huperzia lucidula (Shining clubmoss) protein is Large ribosomal subunit protein uL23c (rpl23).